The chain runs to 714 residues: MPAESAKRFKPSKYVPVSAAAIFLVGATTLFFAFTCPGLSLSVSPAVPVYNAVVFLFVLANFSMATFMDPGVFPRAEEDEDKEDDFRAPLYKTVEIKGIQVRMKWCATCRFYRPPRCSHCSVCDNCVEEFDHHCPWVNNCIGRRNYRYFFLFLLSLTAHITGVFGFGLLYVLYHMEELSGVRTAVTMAVMCVAGLFFIPVAGLTGFHVVLVARGRTTNEQVTGKFRGGVNPFTNGCCNNVSRVLCSSPAPRYLGRPKKEKTIVIRPPFLRPEVSDGQITVKIMDNGIQGELRRTKSKGSLEVTESQSADAEPPPPPKPDLSRYTGLRTHLSLATNEESSLLGKDSPPTPTMYKYRPGYSSSSASAAMPHSSSAKLSRGDSLKEPPSIAESSRQPSYRSEPSLEPESFRSPTLGKGFPFDPLSSGSRSSSLKSAQGTGFELGPLQSIRSEGTTSTSYKSLANQTRNGSLSYDSLLTPSDSPDFESVQAGPEPEPPLGYTSPFLSARLAQQREAERHPRLAPGGPAPREPSPVRYDNLSRHIVASLQEREKLLRQSPPPGREEEPGLGDSGVQCTPGSGHAPRTSSSSDDSKRSPLGKTPLARPVAPRFGKPDGLRGRGLASPEPGLPAPYLGRSVSYSSQKAPPGVPETEEVALQPLLTPKDEVQLKTAYSKSNGQPKSIGSAPPGPGQPPLSSPTRGGVKKVSGVGGTTYEISV.

The Cytoplasmic portion of the chain corresponds to 1–13; it reads MPAESAKRFKPSK. A helical membrane pass occupies residues 14-34; it reads YVPVSAAAIFLVGATTLFFAF. Residues 35-52 lie on the Extracellular side of the membrane; that stretch reads TCPGLSLSVSPAVPVYNA. A helical transmembrane segment spans residues 53–73; it reads VVFLFVLANFSMATFMDPGVF. At 74 to 148 the chain is on the cytoplasmic side; sequence PRAEEDEDKE…NCIGRRNYRY (75 aa). Tyr-91 bears the Phosphotyrosine mark. The DHHC domain occupies 104–154; the sequence is KWCATCRFYRPPRCSHCSVCDNCVEEFDHHCPWVNNCIGRRNYRYFFLFLL. Cys-134 acts as the S-palmitoyl cysteine intermediate in catalysis. The helical transmembrane segment at 149–169 threads the bilayer; the sequence is FFLFLLSLTAHITGVFGFGLL. Residues 170 to 191 are Extracellular-facing; sequence YVLYHMEELSGVRTAVTMAVMC. Residues 192–212 traverse the membrane as a helical segment; the sequence is VAGLFFIPVAGLTGFHVVLVA. Topologically, residues 213 to 714 are cytoplasmic; that stretch reads RGRTTNEQVT…VGGTTYEISV (502 aa). Ser-247 bears the Phosphoserine mark. The disordered stretch occupies residues 289–714; the sequence is GELRRTKSKG…VGGTTYEISV (426 aa). Thr-294 carries the post-translational modification Phosphothreonine. Ser-296 and Ser-299 each carry phosphoserine. A Phosphothreonine modification is found at Thr-303. At Ser-345 the chain carries Phosphoserine. A phosphothreonine mark is found at Thr-348 and Thr-350. Residues 359-373 show a composition bias toward low complexity; sequence SSSSASAAMPHSSSA. Phosphoserine is present on residues Ser-380, Ser-398, Ser-406, and Ser-409. Polar residues predominate over residues 388 to 398; sequence AESSRQPSYRS. The residue at position 411 (Thr-411) is a Phosphothreonine. Residues 422-432 show a composition bias toward low complexity; the sequence is SSGSRSSSLKS. Phosphoserine occurs at positions 425, 429, and 432. Thr-436 carries the phosphothreonine modification. Over residues 445 to 478 the composition is skewed to polar residues; it reads SIRSEGTTSTSYKSLANQTRNGSLSYDSLLTPSD. Phosphoserine occurs at positions 529 and 554. Arg-616 carries the post-translational modification Omega-N-methylarginine. Ser-620 bears the Phosphoserine mark. Thr-658 carries the post-translational modification Phosphothreonine. Residues 667–678 show a composition bias toward polar residues; sequence TAYSKSNGQPKS. The span at 683-692 shows a compositional bias: pro residues; sequence PPGPGQPPLS. Phosphoserine is present on Ser-693. Position 696 is an omega-N-methylarginine (Arg-696).

Belongs to the DHHC palmitoyltransferase family. ERF2/ZDHHC9 subfamily. Phosphorylation regulates association with endocytic proteins and its subcellular localization. Phosphorylation by LYN during fatty acid uptake leads to inactivation of the activity. Post-translationally, autopalmitoylated. Palmitoylation of the C-terminal tail regulates stimulation-dependent plasma membrane motility.

It is found in the cell membrane. The catalysed reaction is L-cysteinyl-[protein] + hexadecanoyl-CoA = S-hexadecanoyl-L-cysteinyl-[protein] + CoA. Palmitoyltransferase that catalyzes the addition of palmitate onto various protein substrates such as CTNND2, CD36, GSDMD, NLRP3, NOD1, NOD2, STAT3 and S1PR1 thus plays a role in various biological processes including cell adhesion, inflammation, fatty acid uptake, bacterial sensing or cardiac functions. Plays an important role in the regulation of synapse efficacy by mediating palmitoylation of delta-catenin/CTNND2, thereby increasing synaptic delivery and surface stabilization of alpha-amino-3-hydroxy-5-methyl-4-isoxazole propionic acid receptors (AMPARs). Under basal conditions, remains at the synaptic membrane through FYN-mediated phosphorylation that prevents association with endocytic proteins. Neuronal activity enhances the internalization and trafficking of DHHC5 from spines to dendritic shafts where it palmitoylates delta-catenin/CTNND2. Regulates cell adhesion at the plasma membrane by palmitoylating GOLGA7B and DSG2. Plays a role in innate immune response by mediating the palmitoylation of NOD1 and NOD2 and their proper recruitment to the bacterial entry site and phagosomes. Also participates in fatty acid uptake by palmitoylating CD36 and thereby targeting it to the plasma membrane. Upon binding of fatty acids to CD36, gets phosphorylated by LYN leading to inactivation and subsequent CD36 caveolar endocytosis. Controls oligodendrocyte development by catalyzing STAT3 palmitoylation. Acts as a regulator of inflammatory response by mediating palmitoylation of NLRP3 and GSDMD. Palmitoylates NLRP3 to promote inflammasome assembly and activation. Activates pyroptosis by catalyzing palmitoylation of gasdermin-D (GSDMD), thereby promoting membrane translocation and pore formation of GSDMD. This Bos taurus (Bovine) protein is Palmitoyltransferase ZDHHC5 (ZDHHC5).